Consider the following 152-residue polypeptide: SKP1-like protein 12 (152 aa).

Residues 94-152 (ILAANYLNIKSLFDLTCQTVADMIKGKTPEEIRSTFNIENDFTPEEEEAVRKENQWAFE) are interaction with the F-box domain of F-box proteins.

This sequence belongs to the SKP1 family. In terms of assembly, part of a SCF (SKP1-cullin-F-box) protein ligase complex. Interacts with ADO3/FKF1, COI1/FBL2, EBF1/FBL6, PP2B10, At3g61590 and At5g49610. In terms of tissue distribution, expressed in young seedlings, roots, leaves, floral stems, inflorescences, and siliques, with a slightly higher level in inflorescence than in other tissues.

It is found in the nucleus. It functions in the pathway protein modification; protein ubiquitination. Functionally, involved in ubiquitination and subsequent proteasomal degradation of target proteins. Together with CUL1, RBX1 and a F-box protein, it forms a SCF E3 ubiquitin ligase complex. The functional specificity of this complex depends on the type of F-box protein. In the SCF complex, it serves as an adapter that links the F-box protein to CUL1. Plays a role during early flowers reproductive development. The protein is SKP1-like protein 12 (ASK12) of Arabidopsis thaliana (Mouse-ear cress).